The sequence spans 108 residues: Acid stress chaperone HdeB (108 aa).

An N-terminal signal peptide occupies residues 1–29; that stretch reads MNISSLRKAFIFMGAVAALSLVNAQSALA. Lys-93 carries the N6-acetyllysine modification.

This sequence belongs to the HdeB family.

The protein resides in the periplasm. Its function is as follows. Required for optimal acid stress protection, which is important for survival of enteric bacteria in the acidic environment of the host stomach. Exhibits a chaperone-like activity at acidic pH by preventing the aggregation of many different periplasmic proteins. The polypeptide is Acid stress chaperone HdeB (Escherichia coli O6:H1 (strain CFT073 / ATCC 700928 / UPEC)).